A 570-amino-acid polypeptide reads, in one-letter code: Dihydroxy-acid dehydratase (570 aa).

Residue Cys61 coordinates [2Fe-2S] cluster. Mg(2+) is bound at residue Asp94. Cys135 provides a ligand contact to [2Fe-2S] cluster. The Mg(2+) site is built by Asp136 and Lys137. Lys137 is subject to N6-carboxylysine. [2Fe-2S] cluster is bound at residue Cys207. Glu459 contributes to the Mg(2+) binding site. The active-site Proton acceptor is the Ser485.

The protein belongs to the IlvD/Edd family. Homodimer. [2Fe-2S] cluster is required as a cofactor. Mg(2+) serves as cofactor.

The enzyme catalyses (2R)-2,3-dihydroxy-3-methylbutanoate = 3-methyl-2-oxobutanoate + H2O. It carries out the reaction (2R,3R)-2,3-dihydroxy-3-methylpentanoate = (S)-3-methyl-2-oxopentanoate + H2O. The protein operates within amino-acid biosynthesis; L-isoleucine biosynthesis; L-isoleucine from 2-oxobutanoate: step 3/4. It functions in the pathway amino-acid biosynthesis; L-valine biosynthesis; L-valine from pyruvate: step 3/4. Functions in the biosynthesis of branched-chain amino acids. Catalyzes the dehydration of (2R,3R)-2,3-dihydroxy-3-methylpentanoate (2,3-dihydroxy-3-methylvalerate) into 2-oxo-3-methylpentanoate (2-oxo-3-methylvalerate) and of (2R)-2,3-dihydroxy-3-methylbutanoate (2,3-dihydroxyisovalerate) into 2-oxo-3-methylbutanoate (2-oxoisovalerate), the penultimate precursor to L-isoleucine and L-valine, respectively. The sequence is that of Dihydroxy-acid dehydratase from Lactococcus lactis subsp. cremoris (strain SK11).